Consider the following 356-residue polypeptide: Cyanide hydratase (356 aa).

The CN hydrolase domain maps to 8 to 287; it reads YKAAAVNAEP…EGLLFVDIDL (280 aa). E48 (proton acceptor) is an active-site residue. The active site involves K130. C165 functions as the Nucleophile in the catalytic mechanism.

Belongs to the carbon-nitrogen hydrolase superfamily. Nitrilase family. Oligomer of dimers, forming left-handed helical fibers.

It catalyses the reaction formamide = hydrogen cyanide + H2O. In terms of biological role, catalyzes the hydration of cyanide to formamide. Degradation of cyanide may be important for plant pathogenic fungi in infection of cyanogenic plants. Can also transform some nitriles like 2-cyanopyridine and fumaronitrile. This is Cyanide hydratase from Aspergillus niger.